The primary structure comprises 737 residues: Pentatricopeptide repeat-containing protein At3g49740 (737 aa).

PPR repeat units follow at residues 20 to 55 (TLLNLNRRLTGLTRSGENRNALKLFADVHRCTTLRP), 56 to 90 (DQYSVSLAITTARHLRDTIFGGQVHCYAIRSGLLC), 91 to 121 (HSHVSNTLLSLYERLGNLASLKKKFDEIDEP), 122 to 152 (DVYSWTTLLSASFKLGDIEYAFEVFDKMPER), 154 to 188 (DVAIWNAMITGCKESGYHETSVELFREMHKLGVRH), 189 to 222 (DKFGFATILSMCDYGSLDFGKQVHSLVIKAGFFI), 223 to 253 (ASSVVNALITMYFNCQVVVDACLVFEETDVA), 256 to 289 (DQVTFNVVIDGLAGFKRDESLLVFRKMLEASLRP), 290 to 321 (TDLTFVSVMGSCSCAAMGHQVHGLAIKTGYEK), 322 to 352 (YTLVSNATMTMYSSFEDFGAAHKVFESLEEK), 353 to 387 (DLVTWNTMISSYNQAKLGKSAMSVYKRMHIIGVKP), 388 to 418 (DEFTFGSLLATSLDLDVLEMVQACIIKFGLS), 420 to 454 (KIEISNALISAYSKNGQIEKADLLFERSLRKNLIS), 455 to 485 (WNAIISGFYHNGFPFEGLERFSCLLESEVRI), 488 to 522 (DAYTLSTLLSICVSTSSLMLGSQTHAYVLRHGQFK), 523 to 553 (ETLIGNALINMYSQCGTIQNSLEVFNQMSEK), 554 to 588 (DVVSWNSLISAYSRHGEGENAVNTYKTMQDEGKVI), 590 to 620 (DAATFSAVLSACSHAGLVEEGLEIFNSMVEF), and 626 to 656 (NVDHFSCLVDLLGRAGHLDEAESLVKISEKT). Positions 663–737 (VWWALFSACA…KQRGCSWMRL (75 aa)) are type E motif; degenerate.

Belongs to the PPR family. PCMP-E subfamily.

In Arabidopsis thaliana (Mouse-ear cress), this protein is Pentatricopeptide repeat-containing protein At3g49740 (PCMP-E84).